Reading from the N-terminus, the 1041-residue chain is Nuclear migration protein unc-83 (1041 aa).

3 disordered regions span residues 258 to 283, 453 to 498, and 613 to 646; these read VGHL…TETV, IHGQ…LEDD, and IRNR…DSIS. The span at 456 to 465 shows a compositional bias: basic residues; the sequence is QKKPLRRASR. The segment covering 613 to 626 has biased composition (basic and acidic residues); that stretch reads IRNRDSDTAPEHSD. 2 coiled-coil regions span residues 785-816 and 931-951; these read RSKE…DLLA and KAEL…FNDM. The KASH domain occupies 986-1041; the sequence is TENEPLTIAEAISSSRLIKFTFALSLLAALAAIFYYHVFGKPFGPHVTYVNGPPPV. Residues 1005–1024 traverse the membrane as a helical; Anchor for type IV membrane protein segment; that stretch reads FTFALSLLAALAAIFYYHVF.

In terms of assembly, component of the unc-83-unc-84 LINC complex which contains at least unc-83 and unc-84. Within the unc-83-unc-84 LINC complex interacts with unc-84 (via C-terminus); the interaction is probably required to recruit unc-83 to the nuclear envelope where it then recruits dynein and kinesin-1 complexes to regulate nuclear migration. Interacts with bicd-1 and dlc-1. Interacts with nud-2 (via C-terminus); the interaction is direct, and is required for recruitment of nud-2 to the nuclear envelope. Interacts with klc-2; the interaction is direct. As to expression, predominantly expressed in migratory nuclei. Expressed in a variety of cell-types, including cells around the pharynx and in the uterus.

It localises to the nucleus membrane. The protein resides in the nucleus outer membrane. Cargo-specific adapter that is involved in nuclear migration during development and thereafter. Component of the unc-83-unc-84 LINC (LInker of Nucleoskeleton and Cytoskeleton) complex where it interacts with unc-84 to form a bridge connecting the nuclear envelope to the cytoskeleton which allows for nuclear transport along microtubules. Within the complex, connects the nuclear envelope to the microtubule cytoskeleton through the kinesin-1 light chain protein klc-2 (most likely within the Kinesin 1 motor complex) to regulate nuclear migrations. Moreover, within the complex, also recruits the large microtubule-associated bicd-1-dlc-1-egal-1 and lis-1-nud-2 complexes to the nuclear envelope to regulate both the bidirectional migration of nuclei and the extent of nuclear migrations. Not required for centrosome attachment to the nucleus. This chain is Nuclear migration protein unc-83, found in Caenorhabditis elegans.